Here is a 282-residue protein sequence, read N- to C-terminus: Cell division protein DivIB (282 aa).

The Cytoplasmic segment spans residues 1–59 (MLDDRSAIEHHKYSQRLTELERRSAAAQQRQQKKKPPKMHVGNKIRGIKIKRYVSNGER). The disordered stretch occupies residues 19 to 41 (ELERRSAAAQQRQQKKKPPKMHV). The span at 31–41 (QQKKKPPKMHV) shows a compositional bias: basic residues. Residues 60 to 80 (VLKLVVLFSAILLFMLYIISP) form a helical membrane-spanning segment. Over 81–282 (LSKITTLHVT…YSYDYGSKDK (202 aa)) the chain is Extracellular. The POTRA domain occupies 82-153 (SKITTLHVTG…QSLQISVKEN (72 aa)).

The protein belongs to the FtsQ/DivIB family. DivIB subfamily.

The protein resides in the cell membrane. Functionally, cell division protein that may be involved in stabilizing or promoting the assembly of the division complex. This chain is Cell division protein DivIB, found in Limosilactobacillus reuteri (strain ATCC 55730 / SD2112) (Lactobacillus reuteri).